The chain runs to 449 residues: Glutathione reductase (449 aa).

Residues serine 15, glycine 16, glutamate 35, threonine 42, cysteine 43, and lysine 51 each contribute to the FAD site. Serine 15 contributes to the glutathione binding site. A disulfide bridge connects residues cysteine 43 and cysteine 48. Tyrosine 99 serves as a coordination point for glutathione. Alanine 115 contributes to the FAD binding site. The NADP(+) site is built by glycine 175, isoleucine 178, glutamate 181, arginine 198, arginine 204, and glycine 261. Residues aspartate 302 and threonine 310 each contribute to the FAD site. Alanine 340 provides a ligand contact to NADP(+). FAD is bound at residue histidine 435. Catalysis depends on histidine 435, which acts as the Proton acceptor.

Belongs to the class-I pyridine nucleotide-disulfide oxidoreductase family. In terms of assembly, homodimer. Requires FAD as cofactor.

The protein localises to the cytoplasm. The catalysed reaction is 2 glutathione + NADP(+) = glutathione disulfide + NADPH + H(+). It participates in xenobiotic degradation; (2,4,5-trichlorophenoxy)acetate degradation. Catalyzes the reduction of glutathione disulfide (GSSG) to reduced glutathione (GSH). Constitutes the major mechanism to maintain a high GSH:GSSG ratio in the cytosol. In Burkholderia cepacia (Pseudomonas cepacia), this protein is Glutathione reductase (gor).